We begin with the raw amino-acid sequence, 708 residues long: Elongation factor G 1 (708 aa).

A tr-type G domain is found at 9-295; the sequence is AKVRNIGIMA…AVVRYLPTPL (287 aa). GTP contacts are provided by residues 18 to 25, 86 to 90, and 140 to 143; these read AHIDAGKT, DTPGH, and NKLD.

Belongs to the TRAFAC class translation factor GTPase superfamily. Classic translation factor GTPase family. EF-G/EF-2 subfamily.

Its subcellular location is the cytoplasm. Functionally, catalyzes the GTP-dependent ribosomal translocation step during translation elongation. During this step, the ribosome changes from the pre-translocational (PRE) to the post-translocational (POST) state as the newly formed A-site-bound peptidyl-tRNA and P-site-bound deacylated tRNA move to the P and E sites, respectively. Catalyzes the coordinated movement of the two tRNA molecules, the mRNA and conformational changes in the ribosome. This chain is Elongation factor G 1 (fusA), found in Streptomyces coelicolor (strain ATCC BAA-471 / A3(2) / M145).